We begin with the raw amino-acid sequence, 189 residues long: Translation initiation factor IF-3 (189 aa).

It belongs to the IF-3 family. As to quaternary structure, monomer.

It is found in the cytoplasm. IF-3 binds to the 30S ribosomal subunit and shifts the equilibrium between 70S ribosomes and their 50S and 30S subunits in favor of the free subunits, thus enhancing the availability of 30S subunits on which protein synthesis initiation begins. This Corynebacterium glutamicum (strain R) protein is Translation initiation factor IF-3.